A 55-amino-acid polypeptide reads, in one-letter code: Large ribosomal subunit protein bL33 (55 aa).

A compositionally biased stretch (basic and acidic residues) spans 1–10 (MAKGGREKIK). Residues 1–27 (MAKGGREKIKLQSTAGTGHFYTTDKNK) form a disordered region.

This sequence belongs to the bacterial ribosomal protein bL33 family.

The sequence is that of Large ribosomal subunit protein bL33 from Polaromonas naphthalenivorans (strain CJ2).